We begin with the raw amino-acid sequence, 20 residues long: Pregnancy-associated glycoprotein 57 (20 aa).

The protein belongs to the peptidase A1 family. Post-translationally, glycosylated.

The protein resides in the secreted. The chain is Pregnancy-associated glycoprotein 57 from Ovis aries (Sheep).